We begin with the raw amino-acid sequence, 62 residues long: Large ribosomal subunit protein uL30 (62 aa).

Belongs to the universal ribosomal protein uL30 family. As to quaternary structure, part of the 50S ribosomal subunit.

The sequence is that of Large ribosomal subunit protein uL30 from Gluconobacter oxydans (strain 621H) (Gluconobacter suboxydans).